We begin with the raw amino-acid sequence, 371 residues long: Alanine dehydrogenase (371 aa).

The substrate site is built by arginine 15 and lysine 75. Histidine 96 (proton donor/acceptor) is an active-site residue. Residues serine 134, aspartate 198, arginine 203, serine 220, 239–240, 267–270, lysine 279, and 298–301 each bind NAD(+); these read VL, VAID, and VANM. Aspartate 270 acts as the Proton donor/acceptor in catalysis.

It belongs to the AlaDH/PNT family. It depends on Mg(2+) as a cofactor.

It carries out the reaction L-alanine + NAD(+) + H2O = pyruvate + NH4(+) + NADH + H(+). The protein operates within amino-acid degradation; L-alanine degradation via dehydrogenase pathway; NH(3) and pyruvate from L-alanine: step 1/1. Functionally, catalyzes the reversible reductive amination of pyruvate to L-alanine. The protein is Alanine dehydrogenase of Halomonas elongata (strain ATCC 33173 / DSM 2581 / NBRC 15536 / NCIMB 2198 / 1H9).